The following is a 347-amino-acid chain: MIPDNRSQQGSLPPTIFLMGPTASGKTDLAIELCRTLPCEIISVDSAMVYRGMDIGTAKPSPEELALAPHRLIDICDPADTYSAADFRRDALAAMSEISGRGRIPLLVGGTMMYFKALLHGMSNLPSANQALRAEIEREAERDGWGALHEELAEKDPDAARLIHPNNRQRLMRAIEVIRLTDKPISSFWQSESGTSGQHPQSGIEDYTYFTSWQADESAGLPYTVFQFALAPAERSVLHSRIQKRFLAMLEAGFLDEVRALMARGDLSPDLPSMRCVGYRQAWDYLSGNEDYDSFVAKGVAATRQLAKRQLTWLRKWRDVHWLDSADPQVVLDTLKKSGLHTTFNFE.

20–27 (GPTASGKT) contacts ATP. 22–27 (TASGKT) provides a ligand contact to substrate. 3 interaction with substrate tRNA regions span residues 45 to 48 (DSAM), 169 to 173 (QRLMR), and 275 to 280 (RCVGYR).

Belongs to the IPP transferase family. Monomer. It depends on Mg(2+) as a cofactor.

The enzyme catalyses adenosine(37) in tRNA + dimethylallyl diphosphate = N(6)-dimethylallyladenosine(37) in tRNA + diphosphate. Functionally, catalyzes the transfer of a dimethylallyl group onto the adenine at position 37 in tRNAs that read codons beginning with uridine, leading to the formation of N6-(dimethylallyl)adenosine (i(6)A). This is tRNA dimethylallyltransferase from Marinobacter nauticus (strain ATCC 700491 / DSM 11845 / VT8) (Marinobacter aquaeolei).